Consider the following 215-residue polypeptide: Orotate phosphoribosyltransferase (215 aa).

K26 serves as a coordination point for 5-phospho-alpha-D-ribose 1-diphosphate. 34 to 35 contributes to the orotate binding site; the sequence is FF. 5-phospho-alpha-D-ribose 1-diphosphate-binding positions include 72–73, R99, K100, K103, H105, and 125–133; these read YK and DDVISSGIS. Orotate is bound by residues S129 and R157.

The protein belongs to the purine/pyrimidine phosphoribosyltransferase family. PyrE subfamily. As to quaternary structure, homodimer. Mg(2+) is required as a cofactor.

The enzyme catalyses orotidine 5'-phosphate + diphosphate = orotate + 5-phospho-alpha-D-ribose 1-diphosphate. It functions in the pathway pyrimidine metabolism; UMP biosynthesis via de novo pathway; UMP from orotate: step 1/2. In terms of biological role, catalyzes the transfer of a ribosyl phosphate group from 5-phosphoribose 1-diphosphate to orotate, leading to the formation of orotidine monophosphate (OMP). The sequence is that of Orotate phosphoribosyltransferase from Halorhodospira halophila (strain DSM 244 / SL1) (Ectothiorhodospira halophila (strain DSM 244 / SL1)).